A 301-amino-acid polypeptide reads, in one-letter code: 2-methoxy-6-polyprenyl-1,4-benzoquinol methylase, mitochondrial (301 aa).

The N-terminal 16 residues, 1 to 16 (MQTTRSTRLLSLARRF), are a transit peptide targeting the mitochondrion. The segment covering 20–31 (RTASQSAQNSKG) has biased composition (polar residues). A disordered region spans residues 20-44 (RTASQSAQNSKGMASGAESISGKEK). S-adenosyl-L-methionine contacts are provided by residues T111, D139, and 173 to 174 (DA).

Belongs to the class I-like SAM-binding methyltransferase superfamily. MenG/UbiE family. Component of a multi-subunit COQ enzyme complex.

Its subcellular location is the mitochondrion inner membrane. The enzyme catalyses a 2-methoxy-6-(all-trans-polyprenyl)benzene-1,4-diol + S-adenosyl-L-methionine = a 5-methoxy-2-methyl-3-(all-trans-polyprenyl)benzene-1,4-diol + S-adenosyl-L-homocysteine + H(+). The protein operates within cofactor biosynthesis; ubiquinone biosynthesis. Its function is as follows. Methyltransferase required for the conversion of 2-polyprenyl-6-methoxy-1,4-benzoquinol (DDMQH2) to 2-polyprenyl-3-methyl-6-methoxy-1,4-benzoquinol (DMQH2). The protein is 2-methoxy-6-polyprenyl-1,4-benzoquinol methylase, mitochondrial of Drosophila melanogaster (Fruit fly).